Consider the following 51-residue polypeptide: Cytoplasmic FMR1-interacting protein 1 (51 aa).

This sequence belongs to the CYFIP family. Component of the WAVE1 complex composed of ABI2, CYFIP1 or CYFIP2, BRK1, NCKAP1 and WASF1/WAVE1. Within the complex, a heterodimer containing NCKAP1 and CYFIP1 interacts with a heterotrimer formed by WAVE1, ABI2 and BRK1. Component of the CYFIP1-EIF4E-FMR1 complex which is composed of CYFIP, EIF4E and FMR1. Interacts with FMR1 but does not bind to related proteins FXR1 or FXR2. Interaction with EIF4E stimulates FMR1 binding. Component of the WAVE2 complex composed of ABI1, CYFIP1/SRA1, NCKAP1/NAP1 (NCKAP1l/HEM1 in hematopoietic cells) and WASF2/WAVE2. Interacts with the active GTP-bound form of RAC1. Interacts through its C-terminus with the C-terminus of DPYSL2/CRMP2 which is necessary for DPYSL2-induced axon outgrowth. Interacts with NYAP1, NYAP2 and MYO16. Interacts with TMEM108 (via N-terminus); the interaction associates TMEM108 with the WAVE1 complex.

It is found in the cytoplasm. It localises to the perinuclear region. Its subcellular location is the cell projection. The protein localises to the lamellipodium. The protein resides in the ruffle. It is found in the synapse. It localises to the synaptosome. Component of the CYFIP1-EIF4E-FMR1 complex which binds to the mRNA cap and mediates translational repression. In the CYFIP1-EIF4E-FMR1 complex this subunit is an adapter between EIF4E and FMR1. Promotes the translation repression activity of FMR1 in brain probably by mediating its association with EIF4E and mRNA. Regulates formation of membrane ruffles and lamellipodia. Plays a role in axon outgrowth. Binds to F-actin but not to RNA. Part of the WAVE complex that regulates actin filament reorganization via its interaction with the Arp2/3 complex. Actin remodeling activity is regulated by RAC1. Regulator of epithelial morphogenesis. As component of the WAVE1 complex, required for BDNF-NTRK2 endocytic trafficking and signaling from early endosomes. In Bos taurus (Bovine), this protein is Cytoplasmic FMR1-interacting protein 1.